A 346-amino-acid polypeptide reads, in one-letter code: Aspartate-semialdehyde dehydrogenase (346 aa).

NADP(+)-binding positions include Ser12–Val15 and Arg40–Ser41. Arg101 lines the phosphate pocket. The active-site Acyl-thioester intermediate is the Cys131. Position 158 (Gln158) interacts with substrate. Residue Ser161 to Gly162 coordinates NADP(+). Residue Lys225 participates in phosphate binding. Arg246 contacts substrate. The Proton acceptor role is filled by His253. Residue Gln326 coordinates NADP(+).

This sequence belongs to the aspartate-semialdehyde dehydrogenase family. Homodimer.

The catalysed reaction is L-aspartate 4-semialdehyde + phosphate + NADP(+) = 4-phospho-L-aspartate + NADPH + H(+). Its pathway is amino-acid biosynthesis; L-lysine biosynthesis via DAP pathway; (S)-tetrahydrodipicolinate from L-aspartate: step 2/4. It participates in amino-acid biosynthesis; L-methionine biosynthesis via de novo pathway; L-homoserine from L-aspartate: step 2/3. It functions in the pathway amino-acid biosynthesis; L-threonine biosynthesis; L-threonine from L-aspartate: step 2/5. Functionally, catalyzes the NADPH-dependent formation of L-aspartate-semialdehyde (L-ASA) by the reductive dephosphorylation of L-aspartyl-4-phosphate. This chain is Aspartate-semialdehyde dehydrogenase, found in Helicobacter pylori (strain J99 / ATCC 700824) (Campylobacter pylori J99).